Consider the following 327-residue polypeptide: BTB/POZ domain-containing protein KCTD12 (327 aa).

Residues 1–28 form a disordered region; that stretch reads MALADSARGLPNGGGGGGGSGSSSSSAE. A2 is subject to N-acetylalanine. Positions 11–21 are enriched in gly residues; sequence PNGGGGGGGSG. Y119 bears the Phosphotyrosine mark. The segment at 129–204 is disordered; sequence LGAPQQPGPG…PLLTPSQSLD (76 aa). 3 positions are modified to phosphoserine: S153, S173, and S187. T198 is subject to Phosphothreonine. The residue at position 202 (S202) is a Phosphoserine.

Interacts as a tetramer with GABBR1 and GABBR2. As to expression, expressed in the brain, mainly in the hippocampus and cerebellum.

The protein resides in the presynaptic cell membrane. It is found in the postsynaptic cell membrane. In terms of biological role, auxiliary subunit of GABA-B receptors that determine the pharmacology and kinetics of the receptor response. Increases agonist potency and markedly alter the G-protein signaling of the receptors by accelerating onset and promoting desensitization. In Mus musculus (Mouse), this protein is BTB/POZ domain-containing protein KCTD12 (Kctd12).